A 212-amino-acid polypeptide reads, in one-letter code: Ribonuclease HII (212 aa).

Residues 24 to 212 (QLVAGVDEVG…PVKKALGIEE (189 aa)) enclose the RNase H type-2 domain. Residues aspartate 30, glutamate 31, and aspartate 122 each contribute to the a divalent metal cation site.

Belongs to the RNase HII family. It depends on Mn(2+) as a cofactor. The cofactor is Mg(2+).

The protein localises to the cytoplasm. It carries out the reaction Endonucleolytic cleavage to 5'-phosphomonoester.. Functionally, endonuclease that specifically degrades the RNA of RNA-DNA hybrids. This Vibrio campbellii (strain ATCC BAA-1116) protein is Ribonuclease HII.